The following is a 538-amino-acid chain: tRNA-2-methylthio-N(6)-dimethylallyladenosine synthase (538 aa).

Positions methionine 1–serine 23 are disordered. The 119-residue stretch at lysine 95 to phenylalanine 213 folds into the MTTase N-terminal domain. Residues cysteine 104, cysteine 140, cysteine 174, cysteine 250, cysteine 254, and cysteine 257 each contribute to the [4Fe-4S] cluster site. The region spanning arginine 236–glutamine 466 is the Radical SAM core domain. The TRAM domain occupies leucine 469–glutamate 532.

This sequence belongs to the methylthiotransferase family. MiaB subfamily. As to quaternary structure, monomer. It depends on [4Fe-4S] cluster as a cofactor.

It localises to the cytoplasm. The catalysed reaction is N(6)-dimethylallyladenosine(37) in tRNA + (sulfur carrier)-SH + AH2 + 2 S-adenosyl-L-methionine = 2-methylsulfanyl-N(6)-dimethylallyladenosine(37) in tRNA + (sulfur carrier)-H + 5'-deoxyadenosine + L-methionine + A + S-adenosyl-L-homocysteine + 2 H(+). Functionally, catalyzes the methylthiolation of N6-(dimethylallyl)adenosine (i(6)A), leading to the formation of 2-methylthio-N6-(dimethylallyl)adenosine (ms(2)i(6)A) at position 37 in tRNAs that read codons beginning with uridine. The sequence is that of tRNA-2-methylthio-N(6)-dimethylallyladenosine synthase from Halalkalibacterium halodurans (strain ATCC BAA-125 / DSM 18197 / FERM 7344 / JCM 9153 / C-125) (Bacillus halodurans).